The following is a 293-amino-acid chain: Movement protein BC1 (293 aa).

It belongs to the begomovirus movement protein BC1 family. Binds to dimeric supercoiled plasmid DNA. In terms of processing, phosphorylated.

Its subcellular location is the host cell membrane. The protein localises to the host microsome membrane. It is found in the host endoplasmic reticulum membrane. Its function is as follows. Transports viral genome to neighboring plant cells directly through plasmosdesmata, without any budding. The movement protein allows efficient cell to cell propagation, by bypassing the host cell wall barrier. Begomovirus genome is shuttled out of nucleus by Nuclear shuttle protein (NSP) and the movement protein transports the DNA-NSP complex to cell plasmodesmata and facilitates further movement across the cell wall. The protein is Movement protein BC1 of Cucurbita moschata (Winter crookneck squash).